The sequence spans 225 residues: Acidic leucine-rich nuclear phosphoprotein 32-related protein 2 (225 aa).

LRR repeat units lie at residues 39–60 (KLELLSMVKCGLTTLKGMPVLP), 61–82 (ALNYLDLSDNELGDDASFDVLI), and 87–107 (EIKKITLSGNRLTLDNVRTLK). The LRRCT domain maps to 121 to 161 (SSLGLLDDYRVKMFEMIPSLKILDGCDVDGEEVEEEFAAGE). Over residues 155-175 (EEFAAGEGAEDSDEGDSDEDG) the composition is skewed to acidic residues. Residues 155–225 (EEFAAGEGAE…DEPEAKKSAE (71 aa)) form a disordered region.

It belongs to the ANP32 family.

This is Acidic leucine-rich nuclear phosphoprotein 32-related protein 2 from Caenorhabditis elegans.